Reading from the N-terminus, the 431-residue chain is Trigger factor (431 aa).

Residues 165–250 (GDTVVIDFDG…IHELKRKELP (86 aa)) form the PPIase FKBP-type domain.

The protein belongs to the FKBP-type PPIase family. Tig subfamily.

It localises to the cytoplasm. It catalyses the reaction [protein]-peptidylproline (omega=180) = [protein]-peptidylproline (omega=0). Its function is as follows. Involved in protein export. Acts as a chaperone by maintaining the newly synthesized protein in an open conformation. Functions as a peptidyl-prolyl cis-trans isomerase. The polypeptide is Trigger factor (Leuconostoc citreum (strain KM20)).